Here is a 279-residue protein sequence, read N- to C-terminus: S-methyl-5'-thioadenosine phosphorylase (279 aa).

Phosphate is bound by residues Ser-28, 70-71 (RH), and 103-104 (SA). Substrate is bound at residue Met-202. Thr-203 contributes to the phosphate binding site. Position 226 to 228 (226 to 228 (DYD)) interacts with substrate.

This sequence belongs to the PNP/MTAP phosphorylase family. MTAP subfamily. As to quaternary structure, homohexamer. Dimer of a homotrimer.

The enzyme catalyses S-methyl-5'-thioadenosine + phosphate = 5-(methylsulfanyl)-alpha-D-ribose 1-phosphate + adenine. It participates in amino-acid biosynthesis; L-methionine biosynthesis via salvage pathway; S-methyl-5-thio-alpha-D-ribose 1-phosphate from S-methyl-5'-thioadenosine (phosphorylase route): step 1/1. Catalyzes the reversible phosphorylation of S-methyl-5'-thioadenosine (MTA) to adenine and 5-methylthioribose-1-phosphate. Involved in the breakdown of MTA, a major by-product of polyamine biosynthesis. Responsible for the first step in the methionine salvage pathway after MTA has been generated from S-adenosylmethionine. Has broad substrate specificity with 6-aminopurine nucleosides as preferred substrates. The protein is S-methyl-5'-thioadenosine phosphorylase of Pyrobaculum aerophilum (strain ATCC 51768 / DSM 7523 / JCM 9630 / CIP 104966 / NBRC 100827 / IM2).